Consider the following 229-residue polypeptide: Sec-independent protein translocase protein TatB (229 aa).

Residues 1 to 21 (MFDIGFSELLLFGVIALIVLG) form a helical membrane-spanning segment. Residues 90–131 (EFEHSQSQNLKTSDKAASPANQANNDSAIQNNNEPATFSYAY) are disordered. Residues 108-131 (PANQANNDSAIQNNNEPATFSYAY) show a composition bias toward polar residues.

This sequence belongs to the TatB family. The Tat system comprises two distinct complexes: a TatABC complex, containing multiple copies of TatA, TatB and TatC subunits, and a separate TatA complex, containing only TatA subunits. Substrates initially bind to the TatABC complex, which probably triggers association of the separate TatA complex to form the active translocon.

It is found in the cell inner membrane. Part of the twin-arginine translocation (Tat) system that transports large folded proteins containing a characteristic twin-arginine motif in their signal peptide across membranes. Together with TatC, TatB is part of a receptor directly interacting with Tat signal peptides. TatB may form an oligomeric binding site that transiently accommodates folded Tat precursor proteins before their translocation. The sequence is that of Sec-independent protein translocase protein TatB from Psychrobacter arcticus (strain DSM 17307 / VKM B-2377 / 273-4).